Consider the following 680-residue polypeptide: MSNKPTTPNLVDPKILFPAAKAAFVKLDPRQLVRNPVIFVTEAMAALVTLFFVLDVATGGGSRLFSGQIAAWLWFTVLFATFAEAVAEGRGKAQADFLRHTKSELSARKLVAPEGRETKEIPATMLKVGDLVLVQAGELIPGDGEVVEGVASVNESAITGESAPVIREAGGDRSAVTGGTEVLSDWVKVRITTAPGSTFVDRMIALIEGAQRQKTPNEIALSILLSGLTLIFLIAVVTLWGLASYSATVLSVTVLSALLVTLIPTTIGGLLSAIGIAGMDRLVRFNVIATSGRAVEAAGDVDTLLLDKTGTITFGNRMASDFLPVPGVTVEELADAALLASLADETPEGRSIVALATGEFGRGASQTGIDAVVPFTAETRLSGVDHRGRRLRKGAVDSVLRFAGLSDSKIPQEFRQAVDKVARTGGTPLAVADGNRLLGVVHLKDVVKPGIKERFSELRAMGIRTVMVTGDNPITAAAIASEAGVDDFLAEATPEDKLAYIRKEQNGGRLIAMCGDGTNDAPALAQADVGVAMQTGTQAAREAANMVDLDSSPTKLIEIVEIGKQLLMTRGSLTTFSIANDVAKYFAIIPALFVTTYPALGVLNIMGLASPQSAILSAVIFNALIIVALIPLALKGVRYRPVGAAALLRGNLLVYGLGGLVLPFAGIKLIDLAVSNLNLV.

The next 4 membrane-spanning stretches (helical) occupy residues 37–57, 69–89, 223–243, and 257–277; these read VIFV…LDVA, IAAW…VAEG, ILLS…WGLA, and ALLV…IGIA. The 4-aspartylphosphate intermediate role is filled by D307. ATP contacts are provided by residues D344, E348, 375–382, and K393; that span reads FTAETRLS. Mg(2+)-binding residues include D516 and D520. Helical transmembrane passes span 586 to 606, 614 to 634, and 652 to 672; these read FAII…LNIM, AILS…PLAL, and LLVY…LIDL.

This sequence belongs to the cation transport ATPase (P-type) (TC 3.A.3) family. Type IA subfamily. In terms of assembly, the system is composed of three essential subunits: KdpA, KdpB and KdpC.

It localises to the cell inner membrane. The catalysed reaction is K(+)(out) + ATP + H2O = K(+)(in) + ADP + phosphate + H(+). Part of the high-affinity ATP-driven potassium transport (or Kdp) system, which catalyzes the hydrolysis of ATP coupled with the electrogenic transport of potassium into the cytoplasm. This subunit is responsible for energy coupling to the transport system and for the release of the potassium ions to the cytoplasm. The chain is Potassium-transporting ATPase ATP-binding subunit from Rhizobium meliloti (strain 1021) (Ensifer meliloti).